Here is a 304-residue protein sequence, read N- to C-terminus: Probable endonuclease 4 (304 aa).

Zn(2+)-binding residues include His-75, His-115, Glu-151, Asp-185, His-188, His-221, Asp-234, His-236, and Glu-266.

Belongs to the AP endonuclease 2 family. Requires Zn(2+) as cofactor.

It carries out the reaction Endonucleolytic cleavage to 5'-phosphooligonucleotide end-products.. Its function is as follows. Endonuclease IV plays a role in DNA repair. It cleaves phosphodiester bonds at apurinic or apyrimidinic (AP) sites, generating a 3'-hydroxyl group and a 5'-terminal sugar phosphate. The chain is Probable endonuclease 4 from Ureaplasma urealyticum serovar 10 (strain ATCC 33699 / Western).